Reading from the N-terminus, the 602-residue chain is Potassium-transporting ATPase potassium-binding subunit (602 aa).

10 consecutive transmembrane segments (helical) span residues 3-23 (ANNL…AVPV), 64-84 (QYAL…YALL), 135-155 (GLTV…LALI), 178-198 (LYVL…QGVI), 282-302 (FSNF…CLVF), 313-333 (VAVL…ETSA), 418-438 (GLYG…LMIG), 456-476 (VSIV…IAVL), 522-542 (WMTA…VLAI), and 565-585 (LFVV…YMPA).

This sequence belongs to the KdpA family. The system is composed of three essential subunits: KdpA, KdpB and KdpC.

The protein localises to the cell inner membrane. Its function is as follows. Part of the high-affinity ATP-driven potassium transport (or Kdp) system, which catalyzes the hydrolysis of ATP coupled with the electrogenic transport of potassium into the cytoplasm. This subunit binds the periplasmic potassium ions and delivers the ions to the membrane domain of KdpB through an intramembrane tunnel. This Burkholderia pseudomallei (strain K96243) protein is Potassium-transporting ATPase potassium-binding subunit.